A 352-amino-acid chain; its full sequence is Quinolinate synthase (352 aa).

The iminosuccinate site is built by histidine 55 and serine 72. A [4Fe-4S] cluster-binding site is contributed by cysteine 117. Iminosuccinate is bound by residues 143-145 (YVN) and serine 160. Cysteine 204 provides a ligand contact to [4Fe-4S] cluster. Iminosuccinate-binding positions include 230–232 (HPE) and threonine 258. Cysteine 303 contacts [4Fe-4S] cluster.

Belongs to the quinolinate synthase family. Type 2 subfamily. [4Fe-4S] cluster is required as a cofactor.

The protein resides in the cytoplasm. It carries out the reaction iminosuccinate + dihydroxyacetone phosphate = quinolinate + phosphate + 2 H2O + H(+). The protein operates within cofactor biosynthesis; NAD(+) biosynthesis; quinolinate from iminoaspartate: step 1/1. Catalyzes the condensation of iminoaspartate with dihydroxyacetone phosphate to form quinolinate. The sequence is that of Quinolinate synthase from Mycobacterium leprae (strain Br4923).